The chain runs to 370 residues: A-type ATP synthase subunit C (370 aa).

This sequence belongs to the V-ATPase V0D/AC39 subunit family. As to quaternary structure, has multiple subunits with at least A(3), B(3), C, D, E, F, H, I and proteolipid K(x).

Its subcellular location is the cell membrane. In terms of biological role, component of the A-type ATP synthase that produces ATP from ADP in the presence of a proton gradient across the membrane. The sequence is that of A-type ATP synthase subunit C from Pyrococcus horikoshii (strain ATCC 700860 / DSM 12428 / JCM 9974 / NBRC 100139 / OT-3).